The following is a 279-amino-acid chain: Presqualene diphosphate synthase (279 aa).

It belongs to the phytoene/squalene synthase family. HpnD subfamily.

The enzyme catalyses 2 (2E,6E)-farnesyl diphosphate = presqualene diphosphate + diphosphate. It functions in the pathway secondary metabolite biosynthesis; hopanoid biosynthesis. Its function is as follows. Involved in the biosynthesis of the hopanoid precursor squalene (SQ) from farnesyl diphosphate (FPP). Catalyzes the first step, the formation of presqualene diphosphate (PSPP) from two molecules of FPP. This Sinorhizobium fredii (strain NBRC 101917 / NGR234) protein is Presqualene diphosphate synthase.